The following is a 620-amino-acid chain: 1-deoxy-D-xylulose-5-phosphate synthase (620 aa).

Residues His-80 and 121–123 (GHS) contribute to the thiamine diphosphate site. Asp-152 is a binding site for Mg(2+). Thiamine diphosphate is bound by residues 153–154 (GA), Asn-181, Tyr-288, and Glu-370. Asn-181 serves as a coordination point for Mg(2+).

The protein belongs to the transketolase family. DXPS subfamily. In terms of assembly, homodimer. Requires Mg(2+) as cofactor. Thiamine diphosphate serves as cofactor.

The enzyme catalyses D-glyceraldehyde 3-phosphate + pyruvate + H(+) = 1-deoxy-D-xylulose 5-phosphate + CO2. It participates in metabolic intermediate biosynthesis; 1-deoxy-D-xylulose 5-phosphate biosynthesis; 1-deoxy-D-xylulose 5-phosphate from D-glyceraldehyde 3-phosphate and pyruvate: step 1/1. Functionally, catalyzes the acyloin condensation reaction between C atoms 2 and 3 of pyruvate and glyceraldehyde 3-phosphate to yield 1-deoxy-D-xylulose-5-phosphate (DXP). The polypeptide is 1-deoxy-D-xylulose-5-phosphate synthase (Photobacterium profundum (strain SS9)).